The primary structure comprises 525 residues: GMP synthase [glutamine-hydrolyzing] (525 aa).

The Glutamine amidotransferase type-1 domain occupies 8–207 (KILILDFGSQ…ALEICACAAN (200 aa)). Cys-85 serves as the catalytic Nucleophile. Catalysis depends on residues His-181 and Glu-183. The 193-residue stretch at 208–400 (WKPASIIEDA…LGLPYNMLYR (193 aa)) folds into the GMPS ATP-PPase domain. 235 to 241 (SGGVDSS) provides a ligand contact to ATP.

As to quaternary structure, homodimer.

The enzyme catalyses XMP + L-glutamine + ATP + H2O = GMP + L-glutamate + AMP + diphosphate + 2 H(+). It participates in purine metabolism; GMP biosynthesis; GMP from XMP (L-Gln route): step 1/1. Functionally, catalyzes the synthesis of GMP from XMP. The sequence is that of GMP synthase [glutamine-hydrolyzing] from Shewanella halifaxensis (strain HAW-EB4).